Here is a 239-residue protein sequence, read N- to C-terminus: Large ribosomal subunit protein uL1 (239 aa).

The protein belongs to the universal ribosomal protein uL1 family. In terms of assembly, part of the 50S ribosomal subunit.

Its function is as follows. Binds directly to 23S rRNA. The L1 stalk is quite mobile in the ribosome, and is involved in E site tRNA release. Functionally, protein L1 is also a translational repressor protein, it controls the translation of the L11 operon by binding to its mRNA. This chain is Large ribosomal subunit protein uL1, found in Rickettsia bellii (strain OSU 85-389).